We begin with the raw amino-acid sequence, 116 residues long: Evasin P1180 (116 aa).

Positions 1–25 (MARNWSFRVIFVSAMWCALLKFATL) are cleaved as a signal peptide. 4 disulfide bridges follow: Cys-38-Cys-58, Cys-54-Cys-95, Cys-71-Cys-100, and Cys-90-Cys-109. N-linked (GlcNAc...) asparagine glycans are attached at residues Asn-45, Asn-73, and Asn-104.

The protein resides in the secreted. In terms of biological role, salivary chemokine-binding protein which binds to host chemokines CCL2, CCL3, CCL4, CCL8 and CCL18. This chain is Evasin P1180, found in Amblyomma triste (Neotropical tick).